Reading from the N-terminus, the 215-residue chain is Cytochrome b6 (215 aa).

The chain crosses the membrane as a helical span at residues isoleucine 32–phenylalanine 52. Cysteine 35 provides a ligand contact to heme c. Heme b contacts are provided by histidine 86 and histidine 100. Helical transmembrane passes span alanine 90 to phenylalanine 110, leucine 116 to tyrosine 136, and leucine 186 to isoleucine 206. Heme b-binding residues include histidine 187 and histidine 202.

This sequence belongs to the cytochrome b family. PetB subfamily. As to quaternary structure, the 4 large subunits of the cytochrome b6-f complex are cytochrome b6, subunit IV (17 kDa polypeptide, PetD), cytochrome f and the Rieske protein, while the 4 small subunits are PetG, PetL, PetM and PetN. The complex functions as a dimer. The cofactor is heme b. Heme c serves as cofactor.

It localises to the plastid. The protein resides in the chloroplast thylakoid membrane. Functionally, component of the cytochrome b6-f complex, which mediates electron transfer between photosystem II (PSII) and photosystem I (PSI), cyclic electron flow around PSI, and state transitions. The protein is Cytochrome b6 of Euglena gracilis.